The primary structure comprises 103 residues: Large ribosomal subunit protein bL21 (103 aa).

The protein belongs to the bacterial ribosomal protein bL21 family. Part of the 50S ribosomal subunit. Contacts protein L20.

Functionally, this protein binds to 23S rRNA in the presence of protein L20. The protein is Large ribosomal subunit protein bL21 of Dechloromonas aromatica (strain RCB).